Here is a 172-residue protein sequence, read N- to C-terminus: Large ribosomal subunit protein uL10 (172 aa).

This sequence belongs to the universal ribosomal protein uL10 family. Part of the ribosomal stalk of the 50S ribosomal subunit. The N-terminus interacts with L11 and the large rRNA to form the base of the stalk. The C-terminus forms an elongated spine to which L12 dimers bind in a sequential fashion forming a multimeric L10(L12)X complex.

In terms of biological role, forms part of the ribosomal stalk, playing a central role in the interaction of the ribosome with GTP-bound translation factors. The polypeptide is Large ribosomal subunit protein uL10 (rplJ) (Liberibacter africanus (Citrus greening disease)).